The chain runs to 631 residues: DNA ligase (631 aa).

NAD(+) contacts are provided by residues 37 to 41 (DAHYD) and 79 to 80 (ST). The active-site N6-AMP-lysine intermediate is the Lys115. NAD(+)-binding residues include Arg131, Glu160, and Lys272. Residues Cys361, Cys364, Cys377, and Cys382 each contribute to the Zn(2+) site. A BRCT domain is found at 539–630 (DVSSPISGKG…SQSSPEQMSL (92 aa)).

Belongs to the NAD-dependent DNA ligase family. LigA subfamily. The cofactor is Mg(2+). Mn(2+) is required as a cofactor.

The enzyme catalyses NAD(+) + (deoxyribonucleotide)n-3'-hydroxyl + 5'-phospho-(deoxyribonucleotide)m = (deoxyribonucleotide)n+m + AMP + beta-nicotinamide D-nucleotide.. DNA ligase that catalyzes the formation of phosphodiester linkages between 5'-phosphoryl and 3'-hydroxyl groups in double-stranded DNA using NAD as a coenzyme and as the energy source for the reaction. It is essential for DNA replication and repair of damaged DNA. This is DNA ligase from Desulfatibacillum aliphaticivorans.